A 1960-amino-acid chain; its full sequence is MFGGAKPSFGATPAATSFGGFSGTTTTTPFGQSAFGKPAAPAFGNTSTFAAQPAQQSLFGAAATPAQPAGGLFGANTSTGFGSTATAQPTAFGAFSQPQQTSNIFGSTQTAASTSLFGQSTLPAFGAAKPTMTAFGQTAAAQPTGSLFGQPAAATSTTGFGGFGTSAPTTTNVFGSGTASAFAQPQATAVGASGVNTGTAVAKYQPTIGTDTLMKSGQANSVNTKQHCITAMKEFEGKSLEELRLEDYMCGRKGPQAGNAPGAFGFGAQVTQPAQPASGGLFGSTAQPSTGLFGQTVTENKSMFGTTAFGQQPATNNAFGAATQQNNFLQKPFGATTTTPFAAPAADASNPFGAKPAFGQGGSLFGQAPATSAAPAFGQTNTGFGGFGTTAGATQQSTLFGATPAADPNKSAFGLGTAASAATTGFGFGAPATSTAGGGLFGNKPATSFAAPTFGATSTASTPFSNFGLNTSTAATGGGLFNSGLNKPATSGFGGFGATSAAPLNFNAGNTGGSLFGNTAKPGGGLFGGGTTTLGGTGAAPTGGLFGGGTTSFGGVGGSLGGGGFGMGTNNSLTGGIMGAQPTLGIMTPSHQPIHQQILARVTSPYGDSPIFKDLKLSSEADATRATNPAAQQAVLDLTSNQYKISTSNNPAPMKVKALGSTLNRKSLFDGLEEFDASVEGFNLKPSAKRLVIKPKVKSVEGGNPSSSIGSAPNTPQSRPKGATPNKERESFSGAIPSEPLPPAGNSPGATNGRESQDNGRRESWLHPNNLEKVRQHNIQTGMDQGSPHNSTLNELVPRKPLDTYRPSSTVRLSVSTIPENPFEDQSSTIARRETFTSQQANESVLSNRSNEAEDSAANQSRLAIEAAAAEAADDESHPTGIVLRRVGYYTIPSLDDLRSYLAEDGSCVVPNFTVGREGYGNVFFGKEMDVAGLNLDEIVHFRNKEIIIYPDDENKPPIGQGLNRDAQVTLDQVWPLDKTKHEAIKDPQRLLEMDWEGKLRRVCDKNDTRFIEYRPETGSWVFRVKHFSKYGLGDSDEEDELPTDPKKAKIATLEAQQRANAEKMTLNSLRQAQKISEDAARNLDPKALVAGVASGFRPMDDTAEFLLMDKTQFFQAGGNSDFSMFDPPRQRPTITSPTAVLAQEMVGNEAHKMQLMKSSFFVEDNAPEDEPMETTGRLLRHRKFFNVEPLVWKDGASESSSQYDFEHPSPALPISSSVSEASLMCDAHYEETSSMATGSIVAAVKETKFEMPVTKAFKFVCKPKVAPIKLRATTVPLPRSIAYEMRDNWIADLGFYKGRSFKLSFGPQNSLVLPSTYNNMQNLKEFTGPSLPVSMVFAPRSATDLSPSVMQLVEFNMVKGNEGFRESIIPHLEVQLNDCLSVNVEGSECPCIHPDSGTKLVSKHFSESLKQRNAGLKEDYSVSVWSLLFALWGDHDELVDLEKNSHYMVMCRRNLLSEWLENTLLGKDLLSKKVSTHSYLEHMLDLLSCHRVNEACELAFSYDDANLALVLSQLSSGAVFRLLMEEQLFAWQQSKSDKYIDLERLKMYMLAAGAPMMQSSHGAINLLENKNWLTALALQLWYFTAPTSSITDALNAYNDAFQAEECYAEPPKPSYRDAPTDTKKPVYDLRYHLLQLHSKRMHSLEETLNPITHTADAMDFRLSWLLLQTLRALGYRHCSPLTEARLSVDFASQLENEGLWQWGIFVLLHIKQQTQRERAVQQMLQRNVSVSAKVALYAEERFIVEELGIPMSWVDYAKAVKAGASGKHHLQAKYLLKAKHFATAHDVIFQHIAPDAIINGKMKYLHSLLIQFEDTEGSSIRVPNWANQGQIFLDFIDISAKFKQIRSVTNIADINARWENLKPQLSELCSRISLLPCPTSKHRLCQSEISQSLSCLVHGMCIVCPEMESSTVLKVALERLPLPQEFASKELRIWLEELLDKIQNEPPFSERQQPTMMEI.

46 consecutive repeat copies span residues 2 to 3 (FG), 9 to 10 (FG), 18 to 19 (FG), 30 to 31 (FG), 35 to 36 (FG), 43 to 44 (FG), 59 to 60 (FG), 73 to 74 (FG), 81 to 82 (FG), 92 to 93 (FG), 105 to 106 (FG), 117 to 118 (FG), 125 to 126 (FG), 135 to 136 (FG), 148 to 149 (FG), 160 to 161 (FG), 163 to 164 (FG), 174 to 175 (FG), 264 to 265 (FG), 266 to 267 (FG), 282 to 283 (FG), 293 to 294 (FG), 304 to 305 (FG), 309 to 310 (FG), 319 to 320 (FG), 333 to 334 (FG), 352 to 353 (FG), 358 to 359 (FG), 365 to 366 (FG), 377 to 378 (FG), 384 to 385 (FG), 387 to 388 (FG), 400 to 401 (FG), 413 to 414 (FG), 426 to 427 (FG), 428 to 429 (FG), 441 to 442 (FG), 454 to 455 (FG), 467 to 468 (FG), 493 to 494 (FG), 496 to 497 (FG), 516 to 517 (FG), 527 to 528 (FG), 546 to 547 (FG), 553 to 554 (FG), and 565 to 566 (FG). The interval 2 to 566 (FGGAKPSFGA…GGSLGGGGFG (565 aa)) is 46 X 2 AA repeats of F-G. Disordered stretches follow at residues 698-768 (KSVE…WLHP) and 781-860 (TGMD…AANQ). Residues 704–718 (NPSSSIGSAPNTPQS) are compositionally biased toward polar residues. A compositionally biased stretch (basic and acidic residues) spans 755–768 (ESQDNGRRESWLHP). 2 stretches are compositionally biased toward polar residues: residues 781–794 (TGMDQGSPHNSTLN) and 806–850 (RPSS…SNRS). Residues 886–1028 (RVGYYTIPSL…GSWVFRVKHF (143 aa)) enclose the Peptidase S59 domain. The active-site Nucleophile is the Ser1029.

The protein belongs to the nucleoporin GLFG family. In terms of assembly, part of the nuclear pore complex (NPC). Interacts with Rae1. Nuclear pore complex protein Nup98: Interacts with pzg and Chro. Interacts with MBD-R2; the interaction allows Nup98 recruitment to chromatin. Interacts with Trx. Interacts with Wds. Interacts with Mgtor and Cp190. Upon ecdysone stimulation, interacts with EcR, CTCF, su(Hw) and Trl. Isoform A and isoform C are autoproteolytically cleaved to yield Nup98 and Nup96 or Nup98 only, respectively. Expressed in brain.

Its subcellular location is the chromosome. The protein localises to the nucleus. It is found in the nucleoplasm. The protein resides in the nucleus membrane. It localises to the nuclear pore complex. Part of the nuclear pore complex (NPC). Required for MAD import as part of the Nup107-160 complex and required for nuclear export of Moe probably via its association with Rae1. Plays a role in nuclear mRNA export. Promotes cell antiviral response by up-regulating FoxK-dependent antiviral gene transcription. In germline stem cells, involved in their maintenance and division together with the TGF-Beta and EGFR signaling pathways. In larval lymph glands, has a role in the maintenance of hematopoiesis by regulating Pvr expression. Functionally, part of the nuclear pore complex (NPC). In the nucleoplasm, binds to transcriptionally active chromatin with a preference for regulatory regions; co-localizes with RNA polymerase II in a RNA-independent manner and before transition into transcription elongation. Plays a role in the transcriptional memory process by stabilizing enhancer-promoter loops and by mediating anchoring of chromatin to the nuclear pore complex region. During larval development, interacts with trx and MBD-R2 and regulates transcription of developmental genes including ecdysone-responsive genes such as Eip74 and E23. In terms of biological role, part of the nuclear pore complex (NPC). This is Nuclear pore complex protein Nup98-Nup96 from Drosophila melanogaster (Fruit fly).